Reading from the N-terminus, the 176-residue chain is tRNA (adenine(37)-N6)-methyltransferase (176 aa).

The TsaA-like domain occupies 1 to 94 (SFSHIWVQFV…YLPFVEAQPD (94 aa)). Residues His-12, 12–13 (HG), Arg-40, Leu-50, and 74–77 (LDGT) each bind S-adenosyl-L-methionine.

The protein belongs to the tRNA methyltransferase O family.

It carries out the reaction N(6)-L-threonylcarbamoyladenosine(37) in tRNA + S-adenosyl-L-methionine = N(6)-methyl,N(6)-L-threonylcarbamoyladenosine(37) in tRNA + S-adenosyl-L-homocysteine + H(+). Its function is as follows. S-adenosyl-L-methionine-dependent methyltransferase responsible for the addition of the methyl group in the formation of N6-methyl-N6-threonylcarbamoyladenosine at position 37 (m(6)t(6)A37) of the tRNA anticodon loop of tRNA(Thr)(GGU). The methyl group of m(6)t(6)A37 appears to slightly improve the efficiency of the tRNA decoding ability. Binds to tRNA. This Eikenella corrodens protein is tRNA (adenine(37)-N6)-methyltransferase.